A 313-amino-acid chain; its full sequence is E3 ubiquitin-protein ligase RNF126 (313 aa).

Ala-2 carries the N-acetylalanine modification. Ser-5 bears the Phosphoserine mark. A required for interaction with BAG6 region spans residues 5 to 100; the sequence is SPQPGRYFCH…FEIPTFPPGA (96 aa). Zn(2+) contacts are provided by Cys-13, Cys-16, Cys-29, and Cys-32. Residues 13 to 32 form a C4-type zinc finger; it reads CHCCSVEIVPRLPDYICPRC. Disordered regions lie at residues 42 to 63 and 95 to 128; these read EETRNTENGSAPSTAPTDQNRQ and TFPPGAQADDGRDPESRREREHQSRHRYGARQPR. Polar residues predominate over residues 47-63; that stretch reads TENGSAPSTAPTDQNRQ. Residues 103 to 116 are compositionally biased toward basic and acidic residues; it reads DDGRDPESRREREH. Residues 117–128 are compositionally biased toward basic residues; sequence QSRHRYGARQPR. The tract at residues 202–306 is sufficient for interaction with AICDA; it reads TGPPPADKEK…SSSSSSSPSN (105 aa). The RING-type zinc finger occupies 231-272; it reads CPVCKEDYALGESVRQLPCNHLFHDSCIVPWLEQHDSCPVCR. Residues 279–313 are disordered; it reads NTATNPPGLTGVGFSSSSSSSSSSSPSNENATSNS. Positions 293–313 are enriched in low complexity; sequence SSSSSSSSSSSPSNENATSNS.

In terms of assembly, interacts with CCDC50, EGFR, FLT3 and SCAMP3. Interacts with BAG6 (via ubiquitin-like domain); required for BAG6-dependent ubiquitination of proteins mislocalized to the cytosol. Interacts with CDKN1A. Interacts with AICDA. Ubiquitinated. May undergo autoubiquitination. As to expression, detected in B-cells (at protein level).

It is found in the cytoplasm. The protein resides in the nucleus. It catalyses the reaction S-ubiquitinyl-[E2 ubiquitin-conjugating enzyme]-L-cysteine + [acceptor protein]-L-lysine = [E2 ubiquitin-conjugating enzyme]-L-cysteine + N(6)-ubiquitinyl-[acceptor protein]-L-lysine.. It participates in protein modification; protein ubiquitination. E3 ubiquitin-protein ligase that mediates ubiquitination oF target proteins. Depending on the associated E2 ligase, mediates 'Lys-27'-, 'Lys-29'-, 'Lys-48'- and/or 'Lys-63'-linked polyubiquitination of substrates. Part of a BAG6-dependent quality control process ensuring that proteins of the secretory pathway that are mislocalized to the cytosol are degraded by the proteasome. Probably acts by providing the ubiquitin ligase activity associated with the BAG6 complex and be responsible for ubiquitination of the hydrophobic mislocalized proteins and their targeting to the proteasome. May also play a role in the endosomal recycling of IGF2R, the cation-independent mannose-6-phosphate receptor. May play a role in the endosomal sorting and degradation of several membrane receptors including EGFR, FLT3, MET and CXCR4, by mediating their ubiquitination. By ubiquitinating CDKN1A/p21 and targeting it for degradation, may also promote cell proliferation. May monoubiquitinate AICDA. Acts as a regulator of DNA repair by mediating 'Lys-27'- and 'Lys-29'-linked polyubiquitination of MRE11, thereby promoting the exonuclease activity of MRE11. In Mus musculus (Mouse), this protein is E3 ubiquitin-protein ligase RNF126.